The primary structure comprises 193 residues: Large ribosomal subunit protein uL18 (193 aa).

Belongs to the universal ribosomal protein uL18 family. In terms of assembly, part of the 50S ribosomal subunit. Contacts the 5S and 23S rRNAs.

Functionally, this is one of the proteins that bind and probably mediate the attachment of the 5S RNA into the large ribosomal subunit, where it forms part of the central protuberance. This chain is Large ribosomal subunit protein uL18, found in Methanococcus maripaludis (strain C5 / ATCC BAA-1333).